Here is a 461-residue protein sequence, read N- to C-terminus: UPF0210 protein LCABL_10110 (461 aa).

The protein belongs to the UPF0210 family. As to quaternary structure, homodimer.

The polypeptide is UPF0210 protein LCABL_10110 (Lacticaseibacillus casei (strain BL23) (Lactobacillus casei)).